Consider the following 160-residue polypeptide: Major pollen allergen Bet v 1-A (160 aa).

Residues lysine 55, tyrosine 82, tyrosine 84, and asparagine 101 each contribute to the brassinolide site.

Belongs to the BetVI family.

The protein resides in the cytoplasm. Functionally, may be a general steroid carrier protein. The sequence is that of Major pollen allergen Bet v 1-A (BETVIA) from Betula pendula (European white birch).